Here is a 283-residue protein sequence, read N- to C-terminus: 2-hydroxy-6-oxononadienedioate/2-hydroxy-6-oxononatrienedioate hydrolase (283 aa).

Positions 35-269 constitute an AB hydrolase-1 domain; that stretch reads VVVMFHGSGP…KCGHWAQWEH (235 aa). The Proton acceptor role is filled by His263.

This sequence belongs to the AB hydrolase superfamily. MhpC family. As to quaternary structure, homodimer.

The enzyme catalyses (2Z,4E)-2-hydroxy-6-oxonona-2,4-dienedioate + H2O = (2Z)-2-hydroxypenta-2,4-dienoate + succinate + H(+). The catalysed reaction is (2Z,4E,7E)-2-hydroxy-6-oxonona-2,4,7-trienedioate + H2O = (2Z)-2-hydroxypenta-2,4-dienoate + fumarate + H(+). The protein operates within aromatic compound metabolism; 3-phenylpropanoate degradation. In terms of biological role, catalyzes the cleavage of the C5-C6 bond of 2-hydroxy-6-oxononadienedioate and 2-hydroxy-6-oxononatrienedioate, a dienol ring fission product of the bacterial meta-cleavage pathway for degradation of phenylpropionic acid. The chain is 2-hydroxy-6-oxononadienedioate/2-hydroxy-6-oxononatrienedioate hydrolase from Pseudomonas sp.